The chain runs to 309 residues: Glutaminase (309 aa).

Substrate is bound by residues Ser65, Asn117, Glu162, Asn169, Tyr193, Tyr245, and Val263.

The protein belongs to the glutaminase family. As to quaternary structure, homotetramer.

It catalyses the reaction L-glutamine + H2O = L-glutamate + NH4(+). The chain is Glutaminase from Bacillus cereus (strain ATCC 10987 / NRS 248).